The following is a 436-amino-acid chain: Histidine--tRNA ligase (436 aa).

The protein belongs to the class-II aminoacyl-tRNA synthetase family. Homodimer.

It localises to the cytoplasm. The catalysed reaction is tRNA(His) + L-histidine + ATP = L-histidyl-tRNA(His) + AMP + diphosphate + H(+). The polypeptide is Histidine--tRNA ligase (Psychrobacter sp. (strain PRwf-1)).